The primary structure comprises 151 residues: UPF0178 protein YaiI (151 aa).

The protein belongs to the UPF0178 family.

In Salmonella enteritidis PT4 (strain P125109), this protein is UPF0178 protein YaiI.